The chain runs to 212 residues: Methylthioribulose-1-phosphate dehydratase (212 aa).

The Zn(2+) site is built by His97 and His99.

It belongs to the aldolase class II family. MtnB subfamily. Homotetramer. Zn(2+) is required as a cofactor.

It catalyses the reaction 5-(methylsulfanyl)-D-ribulose 1-phosphate = 5-methylsulfanyl-2,3-dioxopentyl phosphate + H2O. Its pathway is amino-acid biosynthesis; L-methionine biosynthesis via salvage pathway; L-methionine from S-methyl-5-thio-alpha-D-ribose 1-phosphate: step 2/6. Its function is as follows. Catalyzes the dehydration of methylthioribulose-1-phosphate (MTRu-1-P) into 2,3-diketo-5-methylthiopentyl-1-phosphate (DK-MTP-1-P). In Bacillus thuringiensis (strain Al Hakam), this protein is Methylthioribulose-1-phosphate dehydratase.